Consider the following 401-residue polypeptide: Probable [pyruvate dehydrogenase (acetyl-transferring)] kinase, mitochondrial (401 aa).

Residues 131 to 360 (LIELRESDGV…DACIYLKAVP (230 aa)) form the Histidine kinase domain. Residues 247 to 254 (ELFKNAMR), D286, 305 to 306 (ST), and 321 to 326 (GYGYGL) contribute to the ATP site.

Belongs to the PDK/BCKDK protein kinase family.

The protein resides in the mitochondrion matrix. The enzyme catalyses L-seryl-[pyruvate dehydrogenase E1 alpha subunit] + ATP = O-phospho-L-seryl-[pyruvate dehydrogenase E1 alpha subunit] + ADP + H(+). Inhibits the mitochondrial pyruvate dehydrogenase complex by phosphorylation of the E1 alpha subunit, thus contributing to the regulation of glucose metabolism. Required for normal lifespan. The sequence is that of Probable [pyruvate dehydrogenase (acetyl-transferring)] kinase, mitochondrial (pdhk-2) from Caenorhabditis elegans.